The primary structure comprises 459 residues: Glycosyl hydrolase family 109 protein (459 aa).

Residues 1–31 constitute a signal peptide (tat-type signal); the sequence is MHNIHRRNFLKAAGAATAGLVTANIALNAYA. Residues 64–65, Asp86, 135–138, 155–156, and Asn184 each bind NAD(+); these read ER, WEWH, and EV. Substrate is bound by residues Tyr213, Arg232, 244–247, and Tyr326; that span reads YPTH. Tyr244 is an NAD(+) binding site.

It belongs to the Gfo/Idh/MocA family. Glycosyl hydrolase 109 subfamily. NAD(+) is required as a cofactor. In terms of processing, predicted to be exported by the Tat system. The position of the signal peptide cleavage has not been experimentally proven.

Glycosidase. The protein is Glycosyl hydrolase family 109 protein of Shewanella baltica (strain OS155 / ATCC BAA-1091).